We begin with the raw amino-acid sequence, 195 residues long: dTTP/UTP pyrophosphatase (195 aa).

D76 acts as the Proton acceptor in catalysis.

Belongs to the Maf family. YhdE subfamily. A divalent metal cation is required as a cofactor.

Its subcellular location is the cytoplasm. It catalyses the reaction dTTP + H2O = dTMP + diphosphate + H(+). The catalysed reaction is UTP + H2O = UMP + diphosphate + H(+). Functionally, nucleoside triphosphate pyrophosphatase that hydrolyzes dTTP and UTP. May have a dual role in cell division arrest and in preventing the incorporation of modified nucleotides into cellular nucleic acids. In Shewanella frigidimarina (strain NCIMB 400), this protein is dTTP/UTP pyrophosphatase.